Here is a 355-residue protein sequence, read N- to C-terminus: MKIAVLLSGGVDSSIALYKVINKGYTNIKCYYLKIWLEDELSYIGNCPWQEDLNYVEAVCNKFNIPYEIINFQKEYYNKVVIYTIEELKNGNTPSPDIFCNQRIKFGAFFEKINEQYDLVVTGHYARIQIKEKKFFLKQAKDKIKDQSYFLSHLSQEQMSKLYFPLGTLFKSEVRQIAKSINLPNKDRKDSQGICFLGKIKYNEFIKYHLGEKKGNIVEKETGKIIGIHNGYWFFTVGQRRGIKLSNGPWFVIEKDLEKNIIYISHNENYLKQAKRKFLVHEIHWINGMPSDFENFKIKIRHGEKKYSCKLRLITNNLIEIFLNKKDHGISPGQFAIFYKNTECLGGAKIFKIIE.

ATP is bound by residues 6–13 and leucine 33; that span reads LLSGGVDS. The Nucleophile role is filled by cysteine 100. Cysteines 100 and 195 form a disulfide. Residue glycine 123 coordinates ATP. Positions 145 to 147 are interaction with tRNA; it reads KDQ. The active-site Cysteine persulfide intermediate is the cysteine 195.

It belongs to the MnmA/TRMU family.

It is found in the cytoplasm. It catalyses the reaction S-sulfanyl-L-cysteinyl-[protein] + uridine(34) in tRNA + AH2 + ATP = 2-thiouridine(34) in tRNA + L-cysteinyl-[protein] + A + AMP + diphosphate + H(+). Its function is as follows. Catalyzes the 2-thiolation of uridine at the wobble position (U34) of tRNA, leading to the formation of s(2)U34. The sequence is that of tRNA-specific 2-thiouridylase MnmA from Borrelia garinii subsp. bavariensis (strain ATCC BAA-2496 / DSM 23469 / PBi) (Borreliella bavariensis).